Here is a 319-residue protein sequence, read N- to C-terminus: MIFFTFEHLFNHISFSIVSIVITIHLITLVVNKIVELDDSLEKGMILTFSCITGLLVIRWIFAGHFPLSDLYESLIFLSWSFYIIHMIPYFKNKKLSAITAPGAIFTQGFATSGFFTQMKQSTILVPALQSQWLMMHVSMMILAYAALLCGSLLSVALLVITFQNNISLFGKRKLLLNESLFIDKIQYVNEKNNILQGTYLFSLINFYRYQLIEQLDRWSSRVISLGFLFLTMGILSGAVWANEAWGSYWNWDPKETWAFITWTIFAIYLHIKTNINLKSENSAIVASIGFLIIWICYFGVNLLGIGLHSYGSFILKST.

A run of 8 helical transmembrane segments spans residues 15-35, 44-64, 71-91, 96-116, 141-161, 223-243, 258-278, and 284-304; these read FSIV…NKIV, GMIL…IFAG, LYES…IPYF, LSAI…SGFF, MILA…LLVI, VISL…VWAN, WAFI…NINL, and AIVA…VNLL.

The protein belongs to the CcmF/CycK/Ccl1/NrfE/CcsA family. May interact with Ccs1.

It localises to the plastid. The protein localises to the chloroplast thylakoid membrane. Its function is as follows. Required during biogenesis of c-type cytochromes (cytochrome c6 and cytochrome f) at the step of heme attachment. This chain is Cytochrome c biogenesis protein CcsA, found in Fagopyrum esculentum subsp. ancestrale (Wild buckwheat).